Reading from the N-terminus, the 964-residue chain is Lon protease homolog, mitochondrial (964 aa).

One can recognise a Lon N-terminal domain in the interval 89-300 (VIALPLPHRP…LTLELVKKEM (212 aa)). 455 to 462 (GPPGVGKT) is a binding site for ATP. The tract at residues 663–740 (GVSNEPDHES…TSKGNKGTDG (78 aa)) is disordered. Polar residues predominate over residues 673–687 (VSASVTEESGNGDNT). Over residues 688–698 (TTKDEILKDPA) the composition is skewed to basic and acidic residues. Positions 703–712 (SVTNNVTNPA) are enriched in polar residues. One can recognise a Lon proteolytic domain in the interval 773–957 (HTPVGVVMGL…SEIYDLAFQS (185 aa)). Residues Ser863 and Lys906 contribute to the active site.

The protein belongs to the peptidase S16 family. As to quaternary structure, homoheptamer. Organized in a ring with a central cavity.

The protein localises to the mitochondrion matrix. The enzyme catalyses Hydrolysis of proteins in presence of ATP.. ATP-dependent serine protease that mediates the selective degradation of misfolded, unassembled or oxidatively damaged polypeptides as well as certain short-lived regulatory proteins in the mitochondrial matrix. May also have a chaperone function in the assembly of inner membrane protein complexes. Participates in the regulation of mitochondrial gene expression and in the maintenance of the integrity of the mitochondrial genome. Binds to mitochondrial DNA in a site-specific manner. In Zea mays (Maize), this protein is Lon protease homolog, mitochondrial (LON2).